The following is a 297-amino-acid chain: IMPACT family member C14C8.09c (297 aa).

A coiled-coil region spans residues 225 to 255 (LRSELQEKNQKDKKKEVNKLEEKMTNAKEPN). 2 stretches are compositionally biased toward basic and acidic residues: residues 228–250 (ELQE…KMTN) and 280–297 (SVDH…EKEE). The interval 228–297 (ELQEKNQKDK…KIIKDVEKEE (70 aa)) is disordered.

This sequence belongs to the IMPACT family.

This Schizosaccharomyces pombe (strain 972 / ATCC 24843) (Fission yeast) protein is IMPACT family member C14C8.09c.